Reading from the N-terminus, the 455-residue chain is Phosphoglucosamine mutase (455 aa).

Catalysis depends on Ser108, which acts as the Phosphoserine intermediate. 4 residues coordinate Mg(2+): Ser108, Asp248, Asp250, and Asp252. Ser108 carries the post-translational modification Phosphoserine.

Belongs to the phosphohexose mutase family. Mg(2+) serves as cofactor. In terms of processing, activated by phosphorylation.

It carries out the reaction alpha-D-glucosamine 1-phosphate = D-glucosamine 6-phosphate. Its function is as follows. Catalyzes the conversion of glucosamine-6-phosphate to glucosamine-1-phosphate. The polypeptide is Phosphoglucosamine mutase (Leuconostoc mesenteroides subsp. mesenteroides (strain ATCC 8293 / DSM 20343 / BCRC 11652 / CCM 1803 / JCM 6124 / NCDO 523 / NBRC 100496 / NCIMB 8023 / NCTC 12954 / NRRL B-1118 / 37Y)).